A 1182-amino-acid polypeptide reads, in one-letter code: Receptor-type guanylate cyclase gcy-19 (1182 aa).

The signal sequence occupies residues Met1–Ala24. At Gln25–Ala507 the chain is on the extracellular side. 4 N-linked (GlcNAc...) asparagine glycosylation sites follow: Asn91, Asn369, Asn430, and Asn453. The helical transmembrane segment at Leu508–Phe528 threads the bilayer. The Cytoplasmic segment spans residues Tyr529 to Ile1182. The region spanning Arg562–Asn849 is the Protein kinase domain. The Guanylate cyclase domain occupies Thr907–Glu1037. The disordered stretch occupies residues Val1094 to Glu1164. Residues Ser1142–Pro1152 show a composition bias toward low complexity.

Belongs to the adenylyl cyclase class-4/guanylyl cyclase family. As to expression, expressed in IL2 sensory neurons.

The protein localises to the cell membrane. The catalysed reaction is GTP = 3',5'-cyclic GMP + diphosphate. In terms of biological role, guanylate cyclase involved in the production of the second messenger cGMP. In Caenorhabditis elegans, this protein is Receptor-type guanylate cyclase gcy-19.